The chain runs to 390 residues: UPF0229 protein ABC1477 (390 aa).

Disordered stretches follow at residues 1–31 and 81–118; these read MEKDNGRQFTISQENWSLHRKGFQDQRRHQE and VGQGKGDSKIGDIVARDPNGDKQAGAGKGSGAGDQAGE. The span at 7 to 16 shows a compositional bias: polar residues; the sequence is RQFTISQENW. Basic and acidic residues-rich tracts occupy residues 22-31 and 86-100; these read GFQDQRRHQE and GDSKIGDIVARDPNG.

Belongs to the UPF0229 family.

This is UPF0229 protein ABC1477 from Shouchella clausii (strain KSM-K16) (Alkalihalobacillus clausii).